Reading from the N-terminus, the 806-residue chain is ATP-dependent zinc metalloprotease FTSH 9, chloroplastic (806 aa).

A chloroplast-targeting transit peptide spans 1 to 62 (MTSIELLSPL…SSIQLPQSVP (62 aa)). A disordered region spans residues 84–116 (SSRTIVNCQEGDQKASSSEGEGKTNKDKGRKQG). Helical transmembrane passes span 133 to 153 (IIQAQEIGVMLLQLGIVMFVV) and 271 to 291 (GGFFNSGLIVLFYIAVLAGLL). Residue 369–376 (GLPGTGKT) participates in ATP binding. Zn(2+) is bound at residue His594. Glu595 is an active-site residue. Zn(2+) contacts are provided by His598 and Asp677.

The protein in the N-terminal section; belongs to the AAA ATPase family. It in the C-terminal section; belongs to the peptidase M41 family. Requires Zn(2+) as cofactor.

The protein localises to the plastid. It localises to the chloroplast thylakoid membrane. Functionally, probable ATP-dependent zinc metallopeptidase. The polypeptide is ATP-dependent zinc metalloprotease FTSH 9, chloroplastic (FTSH9) (Arabidopsis thaliana (Mouse-ear cress)).